Reading from the N-terminus, the 856-residue chain is DNA mismatch repair protein MutS (856 aa).

Position 609 to 616 (609 to 616 (GPNMSGKS)) interacts with ATP.

Belongs to the DNA mismatch repair MutS family.

Functionally, this protein is involved in the repair of mismatches in DNA. It is possible that it carries out the mismatch recognition step. This protein has a weak ATPase activity. The sequence is that of DNA mismatch repair protein MutS from Finegoldia magna (strain ATCC 29328 / DSM 20472 / WAL 2508) (Peptostreptococcus magnus).